A 200-amino-acid polypeptide reads, in one-letter code: Adenylate kinase (200 aa).

11–16 provides a ligand contact to ATP; it reads GAGKGT. An NMP region spans residues 31–60; it reads STGDIFRQNIKDRTELGQQVQALVDAGNYV. AMP is bound by residues Thr-32, Arg-37, 58–60, 86–89, and Gln-93; these read NYV and GYPR. Residues 127 to 137 form an LID region; that stretch reads RRAAEQGRADD. Residue Arg-128 coordinates ATP. Arg-134 and Arg-145 together coordinate AMP. Gly-173 contacts ATP.

This sequence belongs to the adenylate kinase family. Monomer.

Its subcellular location is the cytoplasm. The catalysed reaction is AMP + ATP = 2 ADP. The protein operates within purine metabolism; AMP biosynthesis via salvage pathway; AMP from ADP: step 1/1. In terms of biological role, catalyzes the reversible transfer of the terminal phosphate group between ATP and AMP. Plays an important role in cellular energy homeostasis and in adenine nucleotide metabolism. This chain is Adenylate kinase, found in Clavibacter michiganensis subsp. michiganensis (strain NCPPB 382).